We begin with the raw amino-acid sequence, 418 residues long: Cell division protein FtsA (418 aa).

The protein belongs to the FtsA/MreB family. As to quaternary structure, self-interacts. Interacts with FtsZ.

The protein localises to the cell inner membrane. Its function is as follows. Cell division protein that is involved in the assembly of the Z ring. May serve as a membrane anchor for the Z ring. The chain is Cell division protein FtsA from Buchnera aphidicola subsp. Schizaphis graminum (strain Sg).